The chain runs to 929 residues: Isoleucine--tRNA ligase (929 aa).

The short motif at 58-68 (PYANGDIHIGH) is the 'HIGH' region element. Glu-563 contacts L-isoleucyl-5'-AMP. Residues 605-609 (KMSKS) carry the 'KMSKS' region motif. Lys-608 serves as a coordination point for ATP. Residues Cys-892, Cys-895, Cys-912, and Cys-915 each coordinate Zn(2+).

The protein belongs to the class-I aminoacyl-tRNA synthetase family. IleS type 1 subfamily. In terms of assembly, monomer. Zn(2+) is required as a cofactor.

It is found in the cytoplasm. It carries out the reaction tRNA(Ile) + L-isoleucine + ATP = L-isoleucyl-tRNA(Ile) + AMP + diphosphate. In terms of biological role, catalyzes the attachment of isoleucine to tRNA(Ile). As IleRS can inadvertently accommodate and process structurally similar amino acids such as valine, to avoid such errors it has two additional distinct tRNA(Ile)-dependent editing activities. One activity is designated as 'pretransfer' editing and involves the hydrolysis of activated Val-AMP. The other activity is designated 'posttransfer' editing and involves deacylation of mischarged Val-tRNA(Ile). The sequence is that of Isoleucine--tRNA ligase from Neisseria meningitidis serogroup A / serotype 4A (strain DSM 15465 / Z2491).